The following is a 339-amino-acid chain: Ferrochelatase (339 aa).

2 residues coordinate Fe cation: H202 and E283.

This sequence belongs to the ferrochelatase family.

Its subcellular location is the cytoplasm. The enzyme catalyses heme b + 2 H(+) = protoporphyrin IX + Fe(2+). The protein operates within porphyrin-containing compound metabolism; protoheme biosynthesis; protoheme from protoporphyrin-IX: step 1/1. Functionally, catalyzes the ferrous insertion into protoporphyrin IX. This Psychrobacter sp. (strain PRwf-1) protein is Ferrochelatase.